The sequence spans 95 residues: UPF0235 protein Sama_2480 (95 aa).

This sequence belongs to the UPF0235 family.

In Shewanella amazonensis (strain ATCC BAA-1098 / SB2B), this protein is UPF0235 protein Sama_2480.